A 158-amino-acid chain; its full sequence is Phosphopantetheine adenylyltransferase (158 aa).

Residue T10 coordinates substrate. ATP is bound by residues 10 to 11 (TF) and H18. K42, L74, and R88 together coordinate substrate. ATP-binding positions include 89–91 (GLR), E99, and 124–130 (YSFISSS).

Belongs to the bacterial CoaD family. In terms of assembly, homohexamer. It depends on Mg(2+) as a cofactor.

It localises to the cytoplasm. The enzyme catalyses (R)-4'-phosphopantetheine + ATP + H(+) = 3'-dephospho-CoA + diphosphate. It functions in the pathway cofactor biosynthesis; coenzyme A biosynthesis; CoA from (R)-pantothenate: step 4/5. Its function is as follows. Reversibly transfers an adenylyl group from ATP to 4'-phosphopantetheine, yielding dephospho-CoA (dPCoA) and pyrophosphate. This Erwinia tasmaniensis (strain DSM 17950 / CFBP 7177 / CIP 109463 / NCPPB 4357 / Et1/99) protein is Phosphopantetheine adenylyltransferase.